Reading from the N-terminus, the 160-residue chain is SsrA-binding protein (160 aa).

It belongs to the SmpB family.

The protein localises to the cytoplasm. Its function is as follows. Required for rescue of stalled ribosomes mediated by trans-translation. Binds to transfer-messenger RNA (tmRNA), required for stable association of tmRNA with ribosomes. tmRNA and SmpB together mimic tRNA shape, replacing the anticodon stem-loop with SmpB. tmRNA is encoded by the ssrA gene; the 2 termini fold to resemble tRNA(Ala) and it encodes a 'tag peptide', a short internal open reading frame. During trans-translation Ala-aminoacylated tmRNA acts like a tRNA, entering the A-site of stalled ribosomes, displacing the stalled mRNA. The ribosome then switches to translate the ORF on the tmRNA; the nascent peptide is terminated with the 'tag peptide' encoded by the tmRNA and targeted for degradation. The ribosome is freed to recommence translation, which seems to be the essential function of trans-translation. This is SsrA-binding protein from Escherichia coli O6:K15:H31 (strain 536 / UPEC).